Here is a 571-residue protein sequence, read N- to C-terminus: Glutamine--tRNA ligase (571 aa).

The 'HIGH' region motif lies at 35–45 (PEPNGYLHIGH). ATP is bound by residues 36–38 (EPN) and 42–48 (HIGHAKS). D68 and Y213 together coordinate L-glutamine. ATP-binding positions include T232, 262–263 (RL), and 270–272 (LSK). A 'KMSKS' region motif is present at residues 269 to 273 (ILSKR).

This sequence belongs to the class-I aminoacyl-tRNA synthetase family. In terms of assembly, monomer.

Its subcellular location is the cytoplasm. It catalyses the reaction tRNA(Gln) + L-glutamine + ATP = L-glutaminyl-tRNA(Gln) + AMP + diphosphate. In Buchnera aphidicola subsp. Acyrthosiphon pisum (strain APS) (Acyrthosiphon pisum symbiotic bacterium), this protein is Glutamine--tRNA ligase.